Consider the following 170-residue polypeptide: Lipoprotein signal peptidase (170 aa).

A run of 4 helical transmembrane segments spans residues 11 to 31, 41 to 61, 69 to 89, and 95 to 115; these read LGWL…KLHF, IVVI…AAFS, WQRW…VVWL, and NETW…GNLY. Catalysis depends on residues D125 and D144. A helical transmembrane segment spans residues 136–156; sequence YFPAFNFADSAITVGAVMLAL.

This sequence belongs to the peptidase A8 family.

It is found in the cell inner membrane. It catalyses the reaction Release of signal peptides from bacterial membrane prolipoproteins. Hydrolyzes -Xaa-Yaa-Zaa-|-(S,diacylglyceryl)Cys-, in which Xaa is hydrophobic (preferably Leu), and Yaa (Ala or Ser) and Zaa (Gly or Ala) have small, neutral side chains.. The protein operates within protein modification; lipoprotein biosynthesis (signal peptide cleavage). This protein specifically catalyzes the removal of signal peptides from prolipoproteins. The sequence is that of Lipoprotein signal peptidase from Pseudomonas fluorescens (strain ATCC BAA-477 / NRRL B-23932 / Pf-5).